A 135-amino-acid chain; its full sequence is Large ribosomal subunit protein bL21 (135 aa).

The tract at residues 85 to 135 (YRVKRGHRQQYTQIEIESLNANGPASSDDEEAAETSDAEPDEDPEAEPAEA) is disordered. Residues 93–107 (QQYTQIEIESLNANG) show a composition bias toward polar residues. Over residues 111-135 (SDDEEAAETSDAEPDEDPEAEPAEA) the composition is skewed to acidic residues.

This sequence belongs to the bacterial ribosomal protein bL21 family. In terms of assembly, part of the 50S ribosomal subunit. Contacts protein L20.

This protein binds to 23S rRNA in the presence of protein L20. The polypeptide is Large ribosomal subunit protein bL21 (Salinibacter ruber (strain DSM 13855 / M31)).